Consider the following 231-residue polypeptide: Flagellar L-ring protein (231 aa).

The signal sequence occupies residues 1–20; sequence MTYRRIPLYLSCLFLLALSG. Cys21 is lipidated: N-palmitoyl cysteine. Cys21 carries S-diacylglycerol cysteine lipidation.

This sequence belongs to the FlgH family. The basal body constitutes a major portion of the flagellar organelle and consists of four rings (L,P,S, and M) mounted on a central rod.

Its subcellular location is the cell outer membrane. It is found in the bacterial flagellum basal body. Functionally, assembles around the rod to form the L-ring and probably protects the motor/basal body from shearing forces during rotation. This is Flagellar L-ring protein from Desulfotalea psychrophila (strain LSv54 / DSM 12343).